Consider the following 357-residue polypeptide: Dihydroorotate dehydrogenase (quinone) (357 aa).

FMN-binding positions include A66 to K70 and T90. K70 serves as a coordination point for substrate. N115–F119 is a substrate binding site. N143 and N176 together coordinate FMN. Residue N176 participates in substrate binding. Residue S179 is the Nucleophile of the active site. N181 serves as a coordination point for substrate. K212 and T240 together coordinate FMN. A substrate-binding site is contributed by N241–T242. FMN is bound by residues G264, G293, and Y314 to T315.

The protein belongs to the dihydroorotate dehydrogenase family. Type 2 subfamily. In terms of assembly, monomer. FMN serves as cofactor.

The protein resides in the cell membrane. The enzyme catalyses (S)-dihydroorotate + a quinone = orotate + a quinol. The protein operates within pyrimidine metabolism; UMP biosynthesis via de novo pathway; orotate from (S)-dihydroorotate (quinone route): step 1/1. In terms of biological role, catalyzes the conversion of dihydroorotate to orotate with quinone as electron acceptor. This is Dihydroorotate dehydrogenase (quinone) from Mycobacterium tuberculosis (strain ATCC 25177 / H37Ra).